Here is a 151-residue protein sequence, read N- to C-terminus: Large ribosomal subunit protein uL15 (151 aa).

The tract at residues 1-51 (MPLKIEDLKPTPGSRKPKKRLGRGIGSGLGKTAGKGHKGEKARGRGKIGRT) is disordered. Residues 23 to 33 (RGIGSGLGKTA) show a composition bias toward gly residues.

It belongs to the universal ribosomal protein uL15 family. Part of the 50S ribosomal subunit.

Functionally, binds to the 23S rRNA. The sequence is that of Large ribosomal subunit protein uL15 from Petrotoga mobilis (strain DSM 10674 / SJ95).